The sequence spans 578 residues: Vi polysaccharide biosynthesis protein VipC/TviE (578 aa).

It participates in glycan metabolism; Vi-antigen biosynthesis. Its pathway is capsule biogenesis; capsule polysaccharide biosynthesis. In Salmonella typhi, this protein is Vi polysaccharide biosynthesis protein VipC/TviE (vipC).